Consider the following 352-residue polypeptide: Ion-translocating oxidoreductase complex subunit D (352 aa).

The next 4 membrane-spanning stretches (helical) occupy residues 20–40 (IMLLVLLAAVPGIAAQLWFFG), 42–62 (GTLVQILLASVSALLAEALVL), 89–109 (IPPLAPWWMVVLGTVFAVIIA), and 123–143 (PAMIGYVVLLISFPVQMTSWL). The residue at position 187 (threonine 187) is an FMN phosphoryl threonine. Helical transmembrane passes span 214-234 (ILAGAGWQWVNLAWLAGGVWL), 242-262 (WHIPLSFLVTLALCATLGWLF), 267-287 (LAAPQIHLLSGATMLGAFFIL), 301-321 (LIFGALAGLLVWMIRSFGGYP), and 322-342 (DGVAFAVLLANITVPLIDYYT).

Belongs to the NqrB/RnfD family. The complex is composed of six subunits: RsxA, RsxB, RsxC, RsxD, RsxE and RsxG. Requires FMN as cofactor.

It localises to the cell inner membrane. Its function is as follows. Part of a membrane-bound complex that couples electron transfer with translocation of ions across the membrane. Required to maintain the reduced state of SoxR. This Escherichia coli O81 (strain ED1a) protein is Ion-translocating oxidoreductase complex subunit D.